The primary structure comprises 521 residues: Pentatricopeptide repeat-containing protein At4g26680, mitochondrial (521 aa).

The transit peptide at 1 to 38 directs the protein to the mitochondrion; the sequence is MIRISIGVNRRLRYQFSSFAGYSGSENPRLFKTLGAAN. 10 PPR repeats span residues 167 to 201, 202 to 236, 237 to 271, 272 to 306, 307 to 341, 342 to 376, 377 to 411, 412 to 446, 447 to 481, and 482 to 516; these read TPRV…GFLP, TVES…KISP, NPYT…GFRA, TDVS…GLQP, NVVT…NVAP, NTVT…GIQR, DILT…NLVP, NSST…GCHP, NEQT…SIPL, and DSRT…KFLQ.

This sequence belongs to the PPR family. P subfamily.

The protein resides in the mitochondrion. This is Pentatricopeptide repeat-containing protein At4g26680, mitochondrial from Arabidopsis thaliana (Mouse-ear cress).